Consider the following 166-residue polypeptide: Small ribosomal subunit protein uS5 (166 aa).

One can recognise an S5 DRBM domain in the interval 12–75; it reads YIEKLVQVNR…EAARRNMIQV (64 aa).

This sequence belongs to the universal ribosomal protein uS5 family. Part of the 30S ribosomal subunit. Contacts proteins S4 and S8.

In terms of biological role, with S4 and S12 plays an important role in translational accuracy. Its function is as follows. Located at the back of the 30S subunit body where it stabilizes the conformation of the head with respect to the body. This Pseudomonas syringae pv. tomato (strain ATCC BAA-871 / DC3000) protein is Small ribosomal subunit protein uS5.